A 239-amino-acid polypeptide reads, in one-letter code: Dolichyldiphosphatase (239 aa).

Over 1–34 the chain is Lumenal; sequence MNSTAAAINPNPNVIPFDDTYILYDSHDFLSFLS. The chain crosses the membrane as a helical span at residues 35-55; sequence AYFSLMPILVLAFYLSWFIIT. The Cytoplasmic segment spans residues 56–131; that stretch reads RELEACIVAF…KIYTSWKNLN (76 aa). The helical transmembrane segment at 132-152 threads the bilayer; sequence FLEKCIFSGALALLSFCVCFS. The Lumenal segment spans residues 153–164; it reads RVYLHYHNLDQV. A helical transmembrane segment spans residues 165–185; it reads IVGFSVGALTGSLYFFIVGII. The Cytoplasmic portion of the chain corresponds to 186-239; that stretch reads RELGLINWFLKLRIVRLFYMTDSYNLAPLTLKENYEAYWKRINQRSFNDKSKRD.

This sequence belongs to the dolichyldiphosphatase family.

It localises to the endoplasmic reticulum membrane. The catalysed reaction is a di-trans,poly-cis-dolichyl diphosphate + H2O = a di-trans,poly-cis-dolichyl phosphate + phosphate + H(+). It functions in the pathway protein modification; protein glycosylation. Functionally, non-essential protein which is required for efficient N-glycosylation. Necessary for maintaining optimal levels of dolichol-linked oligosaccharides. Hydrolyzes dolichyl pyrophosphate at a very high rate and dolichyl monophosphate at a much lower rate. Does not act on phosphatidate. This is Dolichyldiphosphatase (CAX4) from Saccharomyces cerevisiae (strain ATCC 204508 / S288c) (Baker's yeast).